The chain runs to 604 residues: Rhotekin-2 (604 aa).

One can recognise an REM-1 domain in the interval 1 to 74 (MEGQLLRGLA…LQKSKEEIAN (74 aa)). The stretch at 53–79 (VCSARIQAYTAELQKSKEEIANQTGAR) forms a coiled coil. One can recognise a PH domain in the interval 281–387 (ADAFAGFLNE…WMGAFRQHFF (107 aa)). The tract at residues 481–590 (LSPIGEPAPD…PVPVPRQKSI (110 aa)) is disordered. Positions 514-527 (GRANQSKDSATQAG) are enriched in polar residues. Low complexity predominate over residues 529 to 543 (SGASSSPSDPRLSPP).

Its function is as follows. May play an important role in lymphopoiesis. This chain is Rhotekin-2 (Rtkn2), found in Mus musculus (Mouse).